A 299-amino-acid chain; its full sequence is ATP phosphoribosyltransferase (299 aa).

This sequence belongs to the ATP phosphoribosyltransferase family. Long subfamily. Mg(2+) serves as cofactor.

Its subcellular location is the cytoplasm. It catalyses the reaction 1-(5-phospho-beta-D-ribosyl)-ATP + diphosphate = 5-phospho-alpha-D-ribose 1-diphosphate + ATP. It functions in the pathway amino-acid biosynthesis; L-histidine biosynthesis; L-histidine from 5-phospho-alpha-D-ribose 1-diphosphate: step 1/9. Feedback inhibited by histidine. In terms of biological role, catalyzes the condensation of ATP and 5-phosphoribose 1-diphosphate to form N'-(5'-phosphoribosyl)-ATP (PR-ATP). Has a crucial role in the pathway because the rate of histidine biosynthesis seems to be controlled primarily by regulation of HisG enzymatic activity. This Shewanella piezotolerans (strain WP3 / JCM 13877) protein is ATP phosphoribosyltransferase.